A 292-amino-acid chain; its full sequence is Rhodanese-like domain-containing protein 11, chloroplastic (292 aa).

The N-terminal 56 residues, 1-56 (MESLSLPVLNPLLASGSNLFRNQHSRMTSSMVSSLKSPIGGTSLSTVRRFGVGVVR), are a transit peptide targeting the chloroplast. The Rhodanese domain occupies 101–224 (SLSNKPLLDV…AQDEDLVTEG (124 aa)). C184 serves as the catalytic Cysteine persulfide intermediate.

It is found in the plastid. It localises to the chloroplast. The chain is Rhodanese-like domain-containing protein 11, chloroplastic (STR11) from Arabidopsis thaliana (Mouse-ear cress).